Consider the following 522-residue polypeptide: BTB/POZ domain-containing protein 3 (522 aa).

One can recognise a BTB domain in the interval Ala-120–Ala-190. The BACK domain maps to Phe-235–Gln-300.

As to expression, strongly expressed in the primary visual cortex.

The protein resides in the cytoplasm. The protein localises to the cytosol. It localises to the nucleus. Acts as a key regulator of dendritic field orientation during development of sensory cortex. Also directs dendrites toward active axon terminals when ectopically expressed. In Callithrix jacchus (White-tufted-ear marmoset), this protein is BTB/POZ domain-containing protein 3 (BTBD3).